A 376-amino-acid chain; its full sequence is Protein STRICTOSIDINE SYNTHASE-LIKE 8 (376 aa).

The signal sequence occupies residues 1–31 (MPISRRVLTPITAAPVILAVLCFFFWSSIIG). 3 N-linked (GlcNAc...) asparagine glycosylation sites follow: Asn98, Asn172, and Asn224.

It belongs to the strictosidine synthase family.

The protein localises to the vacuole. The chain is Protein STRICTOSIDINE SYNTHASE-LIKE 8 from Arabidopsis thaliana (Mouse-ear cress).